Reading from the N-terminus, the 257-residue chain is Baramicin A1 (257 aa).

The signal sequence occupies residues 1–19; sequence MKSFGLIALAICGVICVAA. The propeptide occupies 20–21; that stretch reads EP. The residue at position 22 (glutamine 22) is a Pyrrolidone carboxylic acid. The interval 95–122 is disordered; that stretch reads GPNFSAKNLGPNGAKSVGIPQRARRSPQ. Asparagine 97 is a glycosylation site (N-linked (GlcNAc...) asparagine). Positions 118-121 are excised as a propeptide; the sequence is RRSP. Glutamine 122 bears the Pyrrolidone carboxylic acid mark. Residues 145–148 constitute a propeptide that is removed on maturation; the sequence is RRSP. A Pyrrolidone carboxylic acid modification is found at glutamine 149. The propeptide occupies 172–175; it reads RRSP. Glutamine 176 bears the Pyrrolidone carboxylic acid mark. Positions 199–204 are excised as a propeptide; the sequence is RRGIND. Residue asparagine 225 is glycosylated (N-linked (GlcNAc...) asparagine).

Post-translationally, proteolytically cleaved. In terms of tissue distribution, hemolymph (at protein level).

It is found in the secreted. Its function is as follows. Secreted immune-induced peptides induced by Toll signaling. Has a significant role in resistance to infection by the entomopathogenic fungus B.bassiana R444 and weak antifungal activity against M.rileyi PHP1705. In adult males, activity appears to be important for neuromuscular processes that mediate correct wing posture upon Toll activation. In Drosophila melanogaster (Fruit fly), this protein is Baramicin A1.